The following is a 430-amino-acid chain: Phosphomethylpyrimidine synthase (430 aa).

Residues Asn67, Met96, Tyr125, His161, 183-185 (SRG), 224-227 (DALR), and Glu263 each bind substrate. Residue His267 coordinates Zn(2+). Tyr290 lines the substrate pocket. His331 contributes to the Zn(2+) binding site. Positions 406, 409, and 413 each coordinate [4Fe-4S] cluster.

This sequence belongs to the ThiC family. As to quaternary structure, homodimer. It depends on [4Fe-4S] cluster as a cofactor.

The catalysed reaction is 5-amino-1-(5-phospho-beta-D-ribosyl)imidazole + S-adenosyl-L-methionine = 4-amino-2-methyl-5-(phosphooxymethyl)pyrimidine + CO + 5'-deoxyadenosine + formate + L-methionine + 3 H(+). The protein operates within cofactor biosynthesis; thiamine diphosphate biosynthesis. Functionally, catalyzes the synthesis of the hydroxymethylpyrimidine phosphate (HMP-P) moiety of thiamine from aminoimidazole ribotide (AIR) in a radical S-adenosyl-L-methionine (SAM)-dependent reaction. In Campylobacter jejuni (strain RM1221), this protein is Phosphomethylpyrimidine synthase.